A 527-amino-acid chain; its full sequence is Transcriptional regulator ATRX (527 aa).

Residues glycine 1–arginine 527 form a disordered region. Over residues arginine 14 to glycine 23 the composition is skewed to polar residues. The span at proline 27–lysine 46 shows a compositional bias: basic and acidic residues. Residues glutamate 47–lysine 59 show a composition bias toward basic residues. The span at valine 60–glutamine 84 shows a compositional bias: basic and acidic residues. Phosphoserine is present on residues serine 62 and serine 74. A compositionally biased stretch (basic residues) spans glycine 85–lysine 94. 4 stretches are compositionally biased toward basic and acidic residues: residues lysine 95–glutamate 122, asparagine 136–lysine 145, aspartate 152–glutamine 194, and lysine 204–lysine 250. A Glycyl lysine isopeptide (Lys-Gly) (interchain with G-Cter in SUMO2) cross-link involves residue lysine 105. Residues serine 112, serine 113, and serine 114 each carry the phosphoserine modification. Serine 162 is modified (phosphoserine). Arginine 184 carries the citrulline modification. Positions lysine 267–arginine 297 are enriched in basic residues. Positions leucine 290–serine 427 are interaction with DAXX. Serine 345, serine 346, and serine 354 each carry phosphoserine. Positions proline 368–lysine 382 are enriched in basic and acidic residues. Positions serine 387–lysine 398 are enriched in acidic residues. Residues glutamate 399–glutamate 410 are compositionally biased toward basic and acidic residues. Residues serine 423, serine 425, and serine 427 each carry the phosphoserine modification. Residues proline 435–leucine 446 are compositionally biased toward basic residues. 2 positions are modified to phosphoserine: serine 449 and serine 453. Composition is skewed to basic and acidic residues over residues glycine 454 to glycine 469 and lysine 509 to arginine 518.

Belongs to the SNF2/RAD54 helicase family. Interacts with DAXX to form the chromatin remodeling complex ATRX:DAXX. Probably binds EZH2. Binds annexin V in a calcium and phosphatidylcholine/phosphatidylserine-dependent manner. Interacts directly with CBX5 via the PxVxL motif. Interacts with RAD50, MRE11 and NBN; indicative for an association with the MRN complex. Interacts with histone MACROH2A1. Interacts with histone H3 peptides methylated at 'Lys-10' with preferences H3K9me3 &gt; H3K9me2 &gt; H3K9me1. Interacts with histone H3 peptides unmethylated at 'Lys-5' (H3K4me0). Interacts with MECP2, SMC1 and SMC3. Interacts with SETDB1, TRIM28 and ZNF274. In terms of processing, citrullinated by PADI4.

The protein resides in the nucleus. Its subcellular location is the chromosome. The protein localises to the telomere. It is found in the PML body. It catalyses the reaction ATP + H2O = ADP + phosphate + H(+). Involved in transcriptional regulation and chromatin remodeling. Facilitates DNA replication in multiple cellular environments and is required for efficient replication of a subset of genomic loci. Binds to DNA tandem repeat sequences in both telomeres and euchromatin and in vitro binds DNA quadruplex structures. May help stabilizing G-rich regions into regular chromatin structures by remodeling G4 DNA and incorporating H3.3-containing nucleosomes. Catalytic component of the chromatin remodeling complex ATRX:DAXX which has ATP-dependent DNA translocase activity and catalyzes the replication-independent deposition of histone H3.3 in pericentric DNA repeats outside S-phase and telomeres, and the in vitro remodeling of H3.3-containing nucleosomes. Its heterochromatin targeting is proposed to involve a combinatorial readout of histone H3 modifications (specifically methylation states of H3K9 and H3K4) and association with CBX5. Involved in maintaining telomere structural integrity in embryonic stem cells probably implying recruitment of CBX5 to telomeres. May be involved in transcriptional regulation of telomeric repeat-containing RNA (TERRA). Acts as a negative regulator of chromatin incorporation of transcriptionally repressive histone MACROH2A1, particularily at telomeres. Participates in the allele-specific gene expression at the imprinted IGF2/H19 gene locus. On the maternal allele, required for the chromatin occupancy of SMC1 and CTCTF within the H19 imprinting control region (ICR) and involved in esatblishment of histone tails modifications in the ICR. Binds to zinc-finger coding genes with atypical chromatin signatures and regulates its H3K9me3 levels. Forms a complex with ZNF274, TRIM28 and SETDB1 to facilitate the deposition and maintenance of H3K9me3 at the 3' exons of zinc-finger genes. In Rattus norvegicus (Rat), this protein is Transcriptional regulator ATRX (Atrx).